Here is a 947-residue protein sequence, read N- to C-terminus: MDSVYIYQWLYANYEVRGYGIALNNTVVCVRVPNFKQVVYVECTDPQHDPRSTFTQHGFRVYETPRACSLYGAKGVGTYFAARVPNYNAMRDVQETQGPFKIHESRVSKTMEFTARAGLPTVGWIQVSQRCVVTRTVTMAAKEYMVPNWRTDVRPAPDIEGVPPAKIVYFDIEVKSDHENVFPSDRDDEVIFQIGLVLCSGTTVLRTDLLSLPGRDYDASVYQYATEGELLHAFIAYIREHEVVAVCGYNIMGFDIPYIIKRCARTSMLGTFKRIGWDSHRLAIEKTAGVGHAKMTYIQWEGVLTIDLMPIIMMDHKLDSYSLDYVANHFVKAGKDPIRPRDIFHAYNTGLMARVGRYCVKDTQLCKQLVDYLNTWVALCEMAGVCNTSIMQLFTQGQQVRVFAQIYRDCTPMDVVDKVYVIPDGGCDSDVVSPSSYTGAYVYEPVPGVYKNVIPMDFQSLYPSIIISKNICYSTLVDQGGEEYAWQEHEGCEHDPQYAKQHALGVEIGVLQCNMAALPRRATQERARMRERISEMKIQYASMTPSVVKCNVFSFRFTHAHEGVLPRVLRNLLESRARVRARIKTTDDPDIRAVLDKKQLAYKISANSVYGTMGTQRGYLPFMAGAMTTTYCGRKLIEKAAHLLKTVVGATIVYGDTDSCYIQLGHDRASLDELWQMAVNASDTVSAFFERPVRLEFEQCIYTKFIIFTKKRYVYRAFTRDGKQRTGSKGVMLSRRDSAMCARNTYAAIMSAILEGSADVPFIAVRMMHDMMIPGALQDDDFVLTKSVQDIGNGDDNNHGSYKVRNPQKAQAAATQRVAPDDAEGYAIALRQEMVKQMPAQAQLAERMRLQGRAVVSGARIEYVVLKHQYGVPEGALGARLLDFERWRDMKVAYPLDRLYYMKSVVNACDQLLVTAGYGPVCSKVYAAHLQLAYVHKQLMRRMMPTV.

It belongs to the DNA polymerase type-B family.

The catalysed reaction is DNA(n) + a 2'-deoxyribonucleoside 5'-triphosphate = DNA(n+1) + diphosphate. This chain is DNA polymerase, found in Red sea bream iridovirus (RSIV).